Consider the following 509-residue polypeptide: Putative 6-phosphofructo-2-kinase/fructose-2,6-bisphosphatase YLR345W (509 aa).

Ser6 bears the Phosphoserine mark. The tract at residues 6 to 291 is 6-phosphofructo-2-kinase; the sequence is SDDEELLNGL…FFLMNLRQKK (286 aa). Residue 90-98 participates in ATP binding; sequence GLPATSKTL. Catalysis depends on Asp173, which acts as the Proton donor/acceptor. Position 212–217 (212–217) interacts with ATP; that stretch reads NIALAL. Arg237 is a beta-D-fructose 6-phosphate binding site. A fructose-2,6-bisphosphatase region spans residues 292–466; it reads GCVYFARCGT…IAHESTLRVL (175 aa). Arg298 is a binding site for beta-D-fructose 2,6-bisphosphate. 415–418 contributes to the ATP binding site; it reads YKES. Residues Tyr433 and Arg464 each contribute to the beta-D-fructose 2,6-bisphosphate site. 460–464 contacts ATP; the sequence is ESTLR.

This sequence in the C-terminal section; belongs to the phosphoglycerate mutase family. Homodimer.

The protein localises to the cytoplasm. The catalysed reaction is beta-D-fructose 2,6-bisphosphate + H2O = beta-D-fructose 6-phosphate + phosphate. It catalyses the reaction beta-D-fructose 6-phosphate + ATP = beta-D-fructose 2,6-bisphosphate + ADP + H(+). Synthesis and degradation of fructose 2,6-bisphosphate. This is Putative 6-phosphofructo-2-kinase/fructose-2,6-bisphosphatase YLR345W from Saccharomyces cerevisiae (strain ATCC 204508 / S288c) (Baker's yeast).